The following is a 209-amino-acid chain: High frequency lysogenization protein HflD homolog (209 aa).

Belongs to the HflD family.

It is found in the cytoplasm. The protein resides in the cell inner membrane. In Proteus mirabilis (strain HI4320), this protein is High frequency lysogenization protein HflD homolog.